Here is a 413-residue protein sequence, read N- to C-terminus: Alpha-1-antiproteinase (413 aa).

An N-terminal signal peptide occupies residues 1–24 (MTPSISWRLLLLAGLCCLVPSYLA). Position 33 is a phosphoserine (serine 33). N-linked (GlcNAc...) asparagine glycans are attached at residues asparagine 64, asparagine 101, and asparagine 265. Residues 368–387 (ATTIVEAVFMSLPPILHFNH) form an RCL region. Serine 378 is modified (phosphoserine).

It belongs to the serpin family. Interacts with CELA2A. Interacts with ERGIC3 and LMAN1/ERGIC53. Interacts with PRSS1/Trypsin.

Its subcellular location is the secreted. Inhibitor of serine proteases. The primary target is elastase, but also has a moderate affinity for plasmin and thrombin. The sequence is that of Alpha-1-antiproteinase (Serpina1) from Mus saxicola (Brown spiny mouse).